Consider the following 506-residue polypeptide: ATP synthase subunit alpha (506 aa).

171-178 (GDRQTGKT) contacts ATP.

This sequence belongs to the ATPase alpha/beta chains family. In terms of assembly, F-type ATPases have 2 components, CF(1) - the catalytic core - and CF(0) - the membrane proton channel. CF(1) has five subunits: alpha(3), beta(3), gamma(1), delta(1), epsilon(1). CF(0) has four main subunits: a, b, b' and c.

The protein resides in the cellular thylakoid membrane. It catalyses the reaction ATP + H2O + 4 H(+)(in) = ADP + phosphate + 5 H(+)(out). In terms of biological role, produces ATP from ADP in the presence of a proton gradient across the membrane. The alpha chain is a regulatory subunit. The chain is ATP synthase subunit alpha from Nostoc punctiforme (strain ATCC 29133 / PCC 73102).